A 620-amino-acid chain; its full sequence is 1-deoxy-D-xylulose-5-phosphate synthase (620 aa).

Residues His-80 and 121 to 123 (GHS) each bind thiamine diphosphate. Asp-152 contributes to the Mg(2+) binding site. Residues 153–154 (GA), Asn-181, Tyr-288, and Glu-370 each bind thiamine diphosphate. Asn-181 is a binding site for Mg(2+).

It belongs to the transketolase family. DXPS subfamily. Homodimer. It depends on Mg(2+) as a cofactor. Requires thiamine diphosphate as cofactor.

The enzyme catalyses D-glyceraldehyde 3-phosphate + pyruvate + H(+) = 1-deoxy-D-xylulose 5-phosphate + CO2. It participates in metabolic intermediate biosynthesis; 1-deoxy-D-xylulose 5-phosphate biosynthesis; 1-deoxy-D-xylulose 5-phosphate from D-glyceraldehyde 3-phosphate and pyruvate: step 1/1. Functionally, catalyzes the acyloin condensation reaction between C atoms 2 and 3 of pyruvate and glyceraldehyde 3-phosphate to yield 1-deoxy-D-xylulose-5-phosphate (DXP). This is 1-deoxy-D-xylulose-5-phosphate synthase from Sodalis glossinidius (strain morsitans).